The chain runs to 652 residues: 1,4-alpha-glucan branching enzyme GlgB (652 aa).

Asp322 (nucleophile) is an active-site residue. The active-site Proton donor is the Glu373.

The protein belongs to the glycosyl hydrolase 13 family. GlgB subfamily. Monomer.

It catalyses the reaction Transfers a segment of a (1-&gt;4)-alpha-D-glucan chain to a primary hydroxy group in a similar glucan chain.. It participates in glycan biosynthesis; glycogen biosynthesis. Functionally, catalyzes the formation of the alpha-1,6-glucosidic linkages in glycogen by scission of a 1,4-alpha-linked oligosaccharide from growing alpha-1,4-glucan chains and the subsequent attachment of the oligosaccharide to the alpha-1,6 position. This chain is 1,4-alpha-glucan branching enzyme GlgB, found in Deinococcus geothermalis (strain DSM 11300 / CIP 105573 / AG-3a).